The sequence spans 546 residues: Chaperonin GroEL (546 aa).

ATP contacts are provided by residues 30–33, Lys-51, 87–91, Gly-415, and Asp-496; these read TLGP and DGTTT. Positions 526–546 are disordered; the sequence is PQKDAPAGGGMPDMGGMGGMM. A compositionally biased stretch (gly residues) spans 532-546; sequence AGGGMPDMGGMGGMM.

Belongs to the chaperonin (HSP60) family. In terms of assembly, forms a cylinder of 14 subunits composed of two heptameric rings stacked back-to-back. Interacts with the co-chaperonin GroES.

Its subcellular location is the cytoplasm. The enzyme catalyses ATP + H2O + a folded polypeptide = ADP + phosphate + an unfolded polypeptide.. Its function is as follows. Together with its co-chaperonin GroES, plays an essential role in assisting protein folding. The GroEL-GroES system forms a nano-cage that allows encapsulation of the non-native substrate proteins and provides a physical environment optimized to promote and accelerate protein folding. The protein is Chaperonin GroEL of Ruegeria pomeroyi (strain ATCC 700808 / DSM 15171 / DSS-3) (Silicibacter pomeroyi).